Consider the following 164-residue polypeptide: Phosphopantetheine adenylyltransferase (164 aa).

It belongs to the eukaryotic CoaD family.

It is found in the cytoplasm. The enzyme catalyses (R)-4'-phosphopantetheine + ATP + H(+) = 3'-dephospho-CoA + diphosphate. The protein operates within cofactor biosynthesis; coenzyme A biosynthesis. Reversibly transfers an adenylyl group from ATP to 4'-phosphopantetheine, yielding dephospho-CoA (dPCoA) and pyrophosphate. The sequence is that of Phosphopantetheine adenylyltransferase from Methanothermobacter thermautotrophicus (strain ATCC 29096 / DSM 1053 / JCM 10044 / NBRC 100330 / Delta H) (Methanobacterium thermoautotrophicum).